Here is an 873-residue protein sequence, read N- to C-terminus: Protein SEY1 (873 aa).

Residues 1 to 750 (MVANGHFFAG…KRSAIGGITQ (750 aa)) are Cytoplasmic-facing. The region spanning 50 to 308 (GFNYHLISVF…IPADGFAVYA (259 aa)) is the GB1/RHD3-type G domain. 60–67 (GSQSTGKS) contacts GTP. The tract at residues 677 to 701 (LDKWIGHTPSSATPADEEDLTPIGG) is disordered. Positions 691-701 (ADEEDLTPIGG) are enriched in acidic residues. A helical transmembrane segment spans residues 751–771 (VPLYFYGLLLALGWNEIVAVL). Topologically, residues 772–774 (RNP) are lumenal. Residues 775–795 (AYFLLLFVCAVTAYVTYQLNL) traverse the membrane as a helical segment. Over 796 to 873 (WGPIIKMTEA…IDDADDDDDF (78 aa)) the chain is Cytoplasmic. Residues 841 to 873 (EGYDMSNMKNRKSAGGYQNNRSHIDDADDDDDF) are disordered.

The protein belongs to the TRAFAC class dynamin-like GTPase superfamily. GB1/RHD3 GTPase family. RHD3 subfamily.

The protein resides in the endoplasmic reticulum membrane. Functionally, cooperates with the reticulon proteins and tubule-shaping DP1 family proteins to generate and maintain the structure of the tubular endoplasmic reticulum network. Has GTPase activity, which is required for its function in ER organization. The polypeptide is Protein SEY1 (Paracoccidioides lutzii (strain ATCC MYA-826 / Pb01) (Paracoccidioides brasiliensis)).